The following is a 309-amino-acid chain: DNA-directed RNA polymerase subunit alpha (309 aa).

The segment at 1–225 (MFQVQCLESA…SLFKLVNSAD (225 aa)) is alpha N-terminal domain (alpha-NTD). Positions 237 to 309 (IVQVSQTDVT…LHERFNLTLN (73 aa)) are alpha C-terminal domain (alpha-CTD).

This sequence belongs to the RNA polymerase alpha chain family. As to quaternary structure, in plastids the minimal PEP RNA polymerase catalytic core is composed of four subunits: alpha, beta, beta', and beta''. When a (nuclear-encoded) sigma factor is associated with the core the holoenzyme is formed, which can initiate transcription.

It localises to the plastid. It is found in the chloroplast. The catalysed reaction is RNA(n) + a ribonucleoside 5'-triphosphate = RNA(n+1) + diphosphate. DNA-dependent RNA polymerase catalyzes the transcription of DNA into RNA using the four ribonucleoside triphosphates as substrates. This Emiliania huxleyi (Coccolithophore) protein is DNA-directed RNA polymerase subunit alpha.